A 504-amino-acid chain; its full sequence is 26S proteasome non-ATPase regulatory subunit 3 (504 aa).

The PCI domain maps to 254 to 434 (ARYFYYQGRI…GYLQSRENID (181 aa)). The tract at residues 485-504 (KEEMERQAEESSDNEGDSDF) is disordered. Residues 494-504 (ESSDNEGDSDF) show a composition bias toward acidic residues.

It belongs to the proteasome subunit S3 family. In terms of assembly, the 26S proteasome is composed of a core protease, known as the 20S proteasome, capped at one or both ends by the 19S regulatory complex (RC). The RC is composed of at least 18 different subunits in two subcomplexes, the base and the lid, which form the portions proximal and distal to the 20S proteolytic core, respectively.

In terms of biological role, acts as a regulatory subunit of the 26 proteasome which is involved in the ATP-dependent degradation of ubiquitinated proteins. The polypeptide is 26S proteasome non-ATPase regulatory subunit 3 (psmD3) (Dictyostelium discoideum (Social amoeba)).